The primary structure comprises 418 residues: Trans-acting enoyl reductase (418 aa).

This sequence belongs to the saccharopine dehydrogenase family. Enoyl reductase subfamily.

In terms of biological role, involved in the reduction of the double bond between C-4 and C-5 during phthiocerol dimycocerosates (DIM A) and glycosylated phenolphthiocerol dimycocerosates (PGL) biosynthesis. In Mycobacterium ulcerans (strain Agy99), this protein is Trans-acting enoyl reductase.